A 385-amino-acid polypeptide reads, in one-letter code: Suppressor protein STP22 of temperature-sensitive alpha-factor receptor and arginine permease (385 aa).

Residues 12–161 (AVVNWLFKVI…LHEPPQDQAP (150 aa)) form the UEV domain. The disordered stretch occupies residues 155 to 219 (PPQDQAPSLP…DMDNTDISPT (65 aa)). Polar residues predominate over residues 168-177 (NTQLQQEQNT). The segment covering 178 to 201 (PPLPPKPKSPHLKPPLPPPPPPQP) has biased composition (pro residues). Residues 272–300 (LRAVEQAIEQTMHSLNAQIDVLTANRAKV) are a coiled coil. One can recognise an SB domain in the interval 322-385 (TDGLNQLYNL…HIQRITSPLS (64 aa)).

The protein belongs to the ubiquitin-conjugating enzyme family. UEV subfamily. Component of the ESCRT-I complex (endosomal sorting complex required for transport I) which consists of STP22, VPS28, SRN2 and MVB12 in a 1:1:1:1 stoichiometry. Interacts with HSE1 and VPS27. Interacts with MVB12 and SRN2.

The protein resides in the cytoplasm. It is found in the endosome. Its subcellular location is the late endosome membrane. Functionally, component of the ESCRT-I complex, a regulator of vesicular trafficking process. Binds to ubiquitinated cargo proteins and is required for the sorting of endocytic ubiquitinated cargos into multivesicular bodies (MVBs). Mediates the association to the ESCRT-0 complex. Required for vacuolar targeting of temperature-sensitive plasma membrane proteins STE2 and CAN1. The sequence is that of Suppressor protein STP22 of temperature-sensitive alpha-factor receptor and arginine permease (STP22) from Saccharomyces cerevisiae (strain ATCC 204508 / S288c) (Baker's yeast).